Consider the following 330-residue polypeptide: Aspartate--ammonia ligase (330 aa).

Belongs to the class-II aminoacyl-tRNA synthetase family. AsnA subfamily.

The protein resides in the cytoplasm. The catalysed reaction is L-aspartate + NH4(+) + ATP = L-asparagine + AMP + diphosphate + H(+). The protein operates within amino-acid biosynthesis; L-asparagine biosynthesis; L-asparagine from L-aspartate (ammonia route): step 1/1. In Yersinia pseudotuberculosis serotype O:1b (strain IP 31758), this protein is Aspartate--ammonia ligase.